We begin with the raw amino-acid sequence, 138 residues long: Small ribosomal subunit protein bS6 (138 aa).

Residues 94 to 138 (VKQDGPLPTPKPTSKEDETEKEEVKPTEDKTESPAQEEKKEDSKE) form a disordered region. Over residues 106–138 (TSKEDETEKEEVKPTEDKTESPAQEEKKEDSKE) the composition is skewed to basic and acidic residues.

The protein belongs to the bacterial ribosomal protein bS6 family.

Binds together with bS18 to 16S ribosomal RNA. The sequence is that of Small ribosomal subunit protein bS6 from Prochlorococcus marinus (strain NATL1A).